The sequence spans 331 residues: MNLDQKGLKKRSITVAYFFNTIGKKNDIKFRRLNEVDEQKRRIFERDLHRPGLALAGFTNLFTYKRVQILGNTETRFLNHLEEEERNRVFANLVRFKMPCIILTSNNKLPQNLLDMATNADIPVYVTRCSSTKTIYIVTGFLDDQFSLYQQYHGSMVDVYGVGVLLTGKSGLGKSEIALDLVERGHGLVADDVVVIHRKGESMVLNAKRNNIIDHFMEIRGLGVVDVRANFGIRAIRDVKEVQVVVELLEWNKEIVYERLGLDIKSRKILGVDVPLVELPIFPGKNITVIIEVVALNFLLKRYSNYVAAEALTDRINDVINREKGEEDSYE.

Residues His153 and Lys174 contribute to the active site. Position 168–175 (168–175 (GKSGLGKS)) interacts with ATP. Position 175 (Ser175) interacts with Mg(2+). Asp192 acts as the Proton acceptor; for phosphorylation activity. Proton donor; for dephosphorylation activity in catalysis. The important for the catalytic mechanism of both phosphorylation and dephosphorylation stretch occupies residues 217 to 226 (MEIRGLGVVD). Glu218 serves as a coordination point for Mg(2+). Arg259 is a catalytic residue. Residues 280-285 (PIFPGK) form an important for the catalytic mechanism of dephosphorylation region.

Belongs to the HPrK/P family. Homohexamer. Requires Mg(2+) as cofactor.

The catalysed reaction is [HPr protein]-L-serine + ATP = [HPr protein]-O-phospho-L-serine + ADP + H(+). It carries out the reaction [HPr protein]-O-phospho-L-serine + phosphate + H(+) = [HPr protein]-L-serine + diphosphate. Its function is as follows. Catalyzes the ATP- as well as the pyrophosphate-dependent phosphorylation of a specific serine residue in HPr, a phosphocarrier protein of the phosphoenolpyruvate-dependent sugar phosphotransferase system (PTS). HprK/P also catalyzes the pyrophosphate-producing, inorganic phosphate-dependent dephosphorylation (phosphorolysis) of seryl-phosphorylated HPr (P-Ser-HPr). The protein is HPr kinase/phosphorylase of Pelodictyon phaeoclathratiforme (strain DSM 5477 / BU-1).